We begin with the raw amino-acid sequence, 394 residues long: Ceramide glucosyltransferase (394 aa).

Residues 1-10 (MALLDLAQEG) are Lumenal-facing. Residues 11 to 32 (MALFGFVLFVVLWLMHFMSIIY) form a helical membrane-spanning segment. Residues 33-195 (TRLHLNKKAT…QVYFGTSHPR (163 aa)) lie on the Cytoplasmic side of the membrane. Position 92 (Asp-92) is a short sequence motif, D1. Lys-117 carries the post-translational modification N6-acetyllysine. Residue Asp-144 is a short sequence motif, D2. The helical transmembrane segment at 196 to 215 (SYISANVTGFKCVTGMSCLM) threads the bilayer. The Lumenal segment spans residues 216–287 (RKDVLDQAGG…KLRINMLPAT (72 aa)). Position 236 (Asp-236) is a short sequence motif, D3. Asp-236 serves as the catalytic Proton acceptor. Residues 272 to 276 (RMIRW) carry the (Q/R)XXRW motif. A helical membrane pass occupies residues 288 to 304 (IICEPISECFVASLIIG). Topologically, residues 305 to 309 (WAAHH) are cytoplasmic. Residues 310 to 328 (VFRWDIMVFFMCHCLAWFI) traverse the membrane as a helical segment. Topologically, residues 329–348 (FDYIQLRGVQGGTLCFSKLD) are lumenal. The chain crosses the membrane as a helical span at residues 349-369 (YAVAWFIRESMTIYIFLSALW). At 370 to 394 (DPTISWRTGRYRLRCGGTAEEILDV) the chain is on the cytoplasmic side.

The protein belongs to the glycosyltransferase 2 family. Interacts with RTN1; regulates the ceramide glucosyltransferase activity of UGCG.

Its subcellular location is the golgi apparatus membrane. The catalysed reaction is an N-acylsphing-4-enine + UDP-alpha-D-glucose = a beta-D-glucosyl-(1&lt;-&gt;1')-N-acylsphing-4-enine + UDP + H(+). It catalyses the reaction UDP-alpha-D-xylose + an N-acylsphing-4-enine = a beta-D-xylosyl-(1&lt;-&gt;1')-N-acylsphing-4-enine + UDP + H(+). The enzyme catalyses N-(9Z-octadecenoyl)-sphing-4-enine + UDP-alpha-D-xylose = beta-D-xylosyl-(1&lt;-&gt;1')-N-(9Z-octadecenoyl)-sphing-4-enine + UDP + H(+). The protein operates within lipid metabolism; sphingolipid metabolism. Functionally, participates in the initial step of the glucosylceramide-based glycosphingolipid/GSL synthetic pathway at the cytosolic surface of the Golgi. Catalyzes the transfer of glucose from UDP-glucose to ceramide to produce glucosylceramide/GlcCer (such as beta-D-glucosyl-(1&lt;-&gt;1')-N-acylsphing-4-enine). Glucosylceramide is the core component of glycosphingolipids/GSLs, amphipathic molecules consisting of a ceramide lipid moiety embedded in the outer leaflet of the membrane, linked to one of hundreds of different externally oriented oligosaccharide structures. Glycosphingolipids are essential components of membrane microdomains that mediate membrane trafficking and signal transduction. They are implicated in many fundamental cellular processes, including growth, differentiation, migration, morphogenesis, cell-to-cell and cell-to-matrix interactions. They are required for instance in the proper development and functioning of the nervous system. As an example of their role in signal transduction, they regulate the leptin receptor/LEPR in the leptin-mediated signaling pathway. They also play an important role in the establishment of the skin barrier regulating keratinocyte differentiation and the proper assembly of the cornified envelope. The biosynthesis of GSLs is also required for the proper intestinal endocytic uptake of nutritional lipids. Catalyzes the synthesis of xylosylceramide/XylCer (such as beta-D-xylosyl-(1&lt;-&gt;1')-N-acylsphing-4-enine) using UDP-Xyl as xylose donor. The polypeptide is Ceramide glucosyltransferase (Mus musculus (Mouse)).